The following is a 454-amino-acid chain: MSNTDTIVAQATPPGRGGVGILRVSGQAAAEVAHAVLGKLPKPRHADYLPFRDTNGTTLDQGIALWFPGPNSFTGEDVLELQGHGGPVILDLLLQRILTLPNVRIARPGEFSERAFLNDKLDLAQAEAIADLIDASSEQAARSALNSLQGVFSTRINQLVEALTHLRIYVEAAIDFPDEEIDFLSDGKIEAQLNGVMADLDAVRTEAHQGSLLREGMKVVIAGRPNAGKSSLLNALAGREAAIVTAIAGTTRDVLREHIHIDGMPLHIIDTAGLRDASDEVERIGIERAWQEIEQADRVLFMVDGTTTQATEPEQIWPEFMARLPKTLPITVVRNKADVTGETLGIADVNTHSLIRLSARTGEGVDTLRDHLKQSMGFTSNTEGGFLARRRHLQALELAAQHLIQGKEQLVSAYAGELLAEELRLAQQSLSEITGEFTSDDLLGRIFSSFCIGK.

3 residues coordinate (6S)-5-formyl-5,6,7,8-tetrahydrofolate: Arg23, Glu80, and Lys120. The region spanning 216–377 (GMKVVIAGRP…LRDHLKQSMG (162 aa)) is the TrmE-type G domain. Asn226 contributes to the K(+) binding site. GTP contacts are provided by residues 226-231 (NAGKSS), 245-251 (TAIAGTT), 270-273 (DTAG), 335-338 (NKAD), and 358-360 (SAR). Ser230 contacts Mg(2+). K(+)-binding residues include Thr245, Ile247, and Thr250. Thr251 contacts Mg(2+). Position 454 (Lys454) interacts with (6S)-5-formyl-5,6,7,8-tetrahydrofolate.

It belongs to the TRAFAC class TrmE-Era-EngA-EngB-Septin-like GTPase superfamily. TrmE GTPase family. In terms of assembly, homodimer. Heterotetramer of two MnmE and two MnmG subunits. Requires K(+) as cofactor.

It is found in the cytoplasm. Functionally, exhibits a very high intrinsic GTPase hydrolysis rate. Involved in the addition of a carboxymethylaminomethyl (cmnm) group at the wobble position (U34) of certain tRNAs, forming tRNA-cmnm(5)s(2)U34. The protein is tRNA modification GTPase MnmE of Pectobacterium atrosepticum (strain SCRI 1043 / ATCC BAA-672) (Erwinia carotovora subsp. atroseptica).